Here is a 410-residue protein sequence, read N- to C-terminus: Serine hydroxymethyltransferase (410 aa).

Residues Leu-119 and 123–125 (GHL) each bind (6S)-5,6,7,8-tetrahydrofolate. N6-(pyridoxal phosphate)lysine is present on Lys-228. 351–353 (SPF) contributes to the (6S)-5,6,7,8-tetrahydrofolate binding site.

The protein belongs to the SHMT family. As to quaternary structure, homodimer. Requires pyridoxal 5'-phosphate as cofactor.

The protein resides in the cytoplasm. The catalysed reaction is (6R)-5,10-methylene-5,6,7,8-tetrahydrofolate + glycine + H2O = (6S)-5,6,7,8-tetrahydrofolate + L-serine. Its pathway is one-carbon metabolism; tetrahydrofolate interconversion. It functions in the pathway amino-acid biosynthesis; glycine biosynthesis; glycine from L-serine: step 1/1. Its function is as follows. Catalyzes the reversible interconversion of serine and glycine with tetrahydrofolate (THF) serving as the one-carbon carrier. This reaction serves as the major source of one-carbon groups required for the biosynthesis of purines, thymidylate, methionine, and other important biomolecules. Also exhibits THF-independent aldolase activity toward beta-hydroxyamino acids, producing glycine and aldehydes, via a retro-aldol mechanism. The protein is Serine hydroxymethyltransferase of Clostridium perfringens (strain ATCC 13124 / DSM 756 / JCM 1290 / NCIMB 6125 / NCTC 8237 / Type A).